The primary structure comprises 245 residues: tRNA pseudouridine synthase A (245 aa).

Catalysis depends on Asp52, which acts as the Nucleophile. Tyr110 lines the substrate pocket.

This sequence belongs to the tRNA pseudouridine synthase TruA family. As to quaternary structure, homodimer.

The enzyme catalyses uridine(38/39/40) in tRNA = pseudouridine(38/39/40) in tRNA. Formation of pseudouridine at positions 38, 39 and 40 in the anticodon stem and loop of transfer RNAs. In Ruminiclostridium cellulolyticum (strain ATCC 35319 / DSM 5812 / JCM 6584 / H10) (Clostridium cellulolyticum), this protein is tRNA pseudouridine synthase A.